The following is a 53-amino-acid chain: Cytochrome c oxidase subunit 7e (53 aa).

Slime mold cytochrome c oxidase consists of at least seven different polypeptides species, subunits I, II, III, IV, V, VI, and VIIe/s in order of MW.

It localises to the mitochondrion inner membrane. The catalysed reaction is 4 Fe(II)-[cytochrome c] + O2 + 8 H(+)(in) = 4 Fe(III)-[cytochrome c] + 2 H2O + 4 H(+)(out). Its function is as follows. This protein is one of the nuclear-coded polypeptide chains of cytochrome c oxidase, the terminal oxidase in mitochondrial electron transport. The polypeptide is Cytochrome c oxidase subunit 7e (cxgE) (Dictyostelium discoideum (Social amoeba)).